Reading from the N-terminus, the 571-residue chain is Proline--tRNA ligase (571 aa).

Belongs to the class-II aminoacyl-tRNA synthetase family. ProS type 1 subfamily. Homodimer.

The protein resides in the cytoplasm. It carries out the reaction tRNA(Pro) + L-proline + ATP = L-prolyl-tRNA(Pro) + AMP + diphosphate. Functionally, catalyzes the attachment of proline to tRNA(Pro) in a two-step reaction: proline is first activated by ATP to form Pro-AMP and then transferred to the acceptor end of tRNA(Pro). As ProRS can inadvertently accommodate and process non-cognate amino acids such as alanine and cysteine, to avoid such errors it has two additional distinct editing activities against alanine. One activity is designated as 'pretransfer' editing and involves the tRNA(Pro)-independent hydrolysis of activated Ala-AMP. The other activity is designated 'posttransfer' editing and involves deacylation of mischarged Ala-tRNA(Pro). The misacylated Cys-tRNA(Pro) is not edited by ProRS. The chain is Proline--tRNA ligase from Azotobacter vinelandii (strain DJ / ATCC BAA-1303).